Reading from the N-terminus, the 259-residue chain is Leucine-rich repeat-containing protein 61 (259 aa).

LRR repeat units follow at residues 54-75 (NLEW…ASLR), 76-97 (QLAV…AACE), and 98-119 (NLQS…QCLA). Residues 138 to 178 (NPLCANASYWAVVRELLPGLKVIDGERVSGRGSELYQLCRD) form the LRRCT domain.

The protein is Leucine-rich repeat-containing protein 61 (Lrrc61) of Mus musculus (Mouse).